Reading from the N-terminus, the 177-residue chain is MSRVAKAPVVIPAGVEVKLNGQEITIKGGKGELTRVLNDAVVVSQEDNTIVFGPREGVTNAWAQAGTARALVNNMVIGVNEGFTKKLILKGVGYRAAMKGNAVGLTLGFSHPVEHALPEGIKAECPTQTEIVVTGCDKQLVGQVAADLRSYRQPEPYKGKGVRYADEIVRTKEAKKK.

The protein belongs to the universal ribosomal protein uL6 family. In terms of assembly, part of the 50S ribosomal subunit.

This protein binds to the 23S rRNA, and is important in its secondary structure. It is located near the subunit interface in the base of the L7/L12 stalk, and near the tRNA binding site of the peptidyltransferase center. This is Large ribosomal subunit protein uL6 from Aliivibrio fischeri (strain MJ11) (Vibrio fischeri).